Consider the following 558-residue polypeptide: NAD(P)H-quinone oxidoreductase chain 4 (558 aa).

14 helical membrane-spanning segments follow: residues Phe-25–Ile-45, Trp-56–Gly-76, Leu-111–Phe-131, Pro-133–Val-153, Leu-157–Trp-177, Phe-189–Phe-209, Gly-230–Val-250, Thr-264–Leu-284, Phe-298–Phe-318, Ile-327–Ser-347, Ala-353–Ala-373, Ile-395–Val-417, Ile-438–Met-458, and Ile-485–Met-505.

This sequence belongs to the complex I subunit 4 family.

It localises to the cellular thylakoid membrane. The enzyme catalyses a plastoquinone + NADH + (n+1) H(+)(in) = a plastoquinol + NAD(+) + n H(+)(out). It catalyses the reaction a plastoquinone + NADPH + (n+1) H(+)(in) = a plastoquinol + NADP(+) + n H(+)(out). NDH-1 shuttles electrons from NAD(P)H, via FMN and iron-sulfur (Fe-S) centers, to quinones in the respiratory chain. The immediate electron acceptor for the enzyme in this species is believed to be plastoquinone. Couples the redox reaction to proton translocation (for every two electrons transferred, four hydrogen ions are translocated across the cytoplasmic membrane), and thus conserves the redox energy in a proton gradient. This chain is NAD(P)H-quinone oxidoreductase chain 4, found in Prochlorococcus marinus (strain MIT 9211).